A 460-amino-acid chain; its full sequence is Elongation factor 1-alpha 3 (460 aa).

Residues 6–243 enclose the tr-type G domain; sequence KTHINIVVIG…DCIIPPQRPT (238 aa). The tract at residues 15–22 is G1; sequence GHVDSGKS. The segment at 71–75 is G2; the sequence is GITID. The tract at residues 92 to 95 is G3; it reads DAPG. The G4 stretch occupies residues 154–157; it reads NKMD. The segment at 195-197 is G5; the sequence is SGF. 5-glutamyl glycerylphosphorylethanolamine occurs at positions 302 and 375.

The protein belongs to the TRAFAC class translation factor GTPase superfamily. Classic translation factor GTPase family. EF-Tu/EF-1A subfamily.

It localises to the cytoplasm. In terms of biological role, this protein promotes the GTP-dependent binding of aminoacyl-tRNA to the A-site of ribosomes during protein biosynthesis. In Oscheius tipulae, this protein is Elongation factor 1-alpha 3 (eft-3).